Here is a 300-residue protein sequence, read N- to C-terminus: NAD kinase (300 aa).

The Proton acceptor role is filled by D75. NAD(+) contacts are provided by residues 75-76, 149-150, R177, D179, 190-195, A214, and Q248; these read DG, ND, and TAYALS.

The protein belongs to the NAD kinase family. The cofactor is a divalent metal cation.

It is found in the cytoplasm. It catalyses the reaction NAD(+) + ATP = ADP + NADP(+) + H(+). Involved in the regulation of the intracellular balance of NAD and NADP, and is a key enzyme in the biosynthesis of NADP. Catalyzes specifically the phosphorylation on 2'-hydroxyl of the adenosine moiety of NAD to yield NADP. This chain is NAD kinase, found in Paraburkholderia phymatum (strain DSM 17167 / CIP 108236 / LMG 21445 / STM815) (Burkholderia phymatum).